A 514-amino-acid polypeptide reads, in one-letter code: 2,3-bisphosphoglycerate-independent phosphoglycerate mutase (514 aa).

Positions 14 and 64 each coordinate Mn(2+). S64 functions as the Phosphoserine intermediate in the catalytic mechanism. Substrate-binding positions include H125, 155 to 156 (RD), R187, R193, 263 to 266 (RADR), and K336. Residues D403, H407, D444, H445, and H463 each contribute to the Mn(2+) site.

Belongs to the BPG-independent phosphoglycerate mutase family. As to quaternary structure, monomer. Mn(2+) serves as cofactor.

The enzyme catalyses (2R)-2-phosphoglycerate = (2R)-3-phosphoglycerate. It participates in carbohydrate degradation; glycolysis; pyruvate from D-glyceraldehyde 3-phosphate: step 3/5. Its function is as follows. Catalyzes the interconversion of 2-phosphoglycerate and 3-phosphoglycerate. This chain is 2,3-bisphosphoglycerate-independent phosphoglycerate mutase, found in Shewanella halifaxensis (strain HAW-EB4).